The chain runs to 169 residues: Probable phospholipid hydroperoxide glutathione peroxidase (169 aa).

The active site involves C43.

This sequence belongs to the glutathione peroxidase family. As to expression, germinating seed, apex, flower, as well as in stressed tissues.

The protein localises to the cytoplasm. The enzyme catalyses a hydroperoxy polyunsaturated fatty acid + 2 glutathione = a hydroxy polyunsaturated fatty acid + glutathione disulfide + H2O. Protects cells and enzymes from oxidative damage, by catalyzing the reduction of hydrogen peroxide, lipid peroxides and organic hydroperoxide, by glutathione. The chain is Probable phospholipid hydroperoxide glutathione peroxidase from Nicotiana sylvestris (Wood tobacco).